Here is a 1002-residue protein sequence, read N- to C-terminus: Glutamate receptor ionotropic, NMDA 3B (1002 aa).

The N-terminal stretch at Met-1–Gly-24 is a signal peptide. The Extracellular portion of the chain corresponds to His-25–His-574. Asn-69, Asn-212, Asn-344, Asn-451, and Asn-465 each carry an N-linked (GlcNAc...) asparagine glycan. 2 disulfide bridges follow: Cys-439–Cys-475 and Cys-445–Cys-476. Residues Ser-531, Ser-533, and Arg-538 each coordinate glycine. The D-serine site is built by Ser-533 and Arg-538. A helical transmembrane segment spans residues Trp-575–Leu-594. Residues Tyr-595–Ser-615 lie on the Cytoplasmic side of the membrane. The segment at residues Tyr-616 to Leu-627 is an intramembrane region (discontinuously helical). At Phe-628–Thr-641 the chain is on the cytoplasmic side. The chain crosses the membrane as a helical span at residues Gly-642 to Thr-661. Residues Ala-662–Ser-832 are Extracellular-facing. Ser-701 contacts glycine. Residues Ser-701, Ala-702, and Asp-745 each coordinate D-serine. Residue Asp-745 coordinates glycine. N-linked (GlcNAc...) asparagine glycosylation is present at Asn-786. A helical membrane pass occupies residues Gly-833–Thr-848. The Cytoplasmic portion of the chain corresponds to Ser-849–Ser-1002. The interval Ala-882–Asp-910 is disordered. The segment covering Gln-891–Leu-906 has biased composition (basic and acidic residues). A coiled-coil region spans residues Leu-944 to Asp-985. The involved in the trafficking and surface expression of NMDARs stretch occupies residues Leu-951–Gly-984.

Belongs to the glutamate-gated ion channel (TC 1.A.10.1) family. NR3B/GRIN3B subfamily. Forms heterotetrameric channels that contain at least two GluN1 subunits and at least a combination of one GluN2 and one GluN3 subunits (in vitro). Forms heterotetrameric channels composed of two GluN1/zeta subunits (GRIN1), and two identical GluN3 subunits (GRIN3A or GRIN3B) (in vitro). Does not form functional homomeric channels. As to expression, expressed in the hippocampus, the corpus callosum, in the facial and trigeminal nuclei of the brainstem and the ventral horn of the spinal cord.

Its subcellular location is the cell membrane. The protein localises to the postsynaptic cell membrane. It catalyses the reaction Ca(2+)(in) = Ca(2+)(out). It carries out the reaction Na(+)(in) = Na(+)(out). Excitatory glycine receptors are inhibited by D-serine at a concentrion of 100uM. In terms of biological role, component of a non-conventional N-methyl-D-aspartate (NMDA) receptors (NMDARs) that function as heterotetrameric, ligand-gated cation channels with low calcium permeability and low voltage-dependent block by Mg(2+). Forms glutamatergic receptor complexes with GluN1 and GluN2 subunits which are activated by glycine binding to the GluN1 and GluN3 subunits and L-glutamate binding to GluN2 subunits. Forms excitatory glycinergic receptor complexes with GluN1 alone which are activated by glycine binding to the GluN1 and GluN3 subunits. GluN3B subunit also binds D-serine and, in the absence of glycine, activates glycinergic receptor complexes, but with lower efficacy than glycine. Each GluN3 subunit confers differential attributes to channel properties, including activation, deactivation and desensitization kinetics, pH sensitivity, Ca2(+) permeability, and binding to allosteric modulators. This Rattus norvegicus (Rat) protein is Glutamate receptor ionotropic, NMDA 3B.